The primary structure comprises 254 residues: HLA class II histocompatibility antigen, DQ alpha 1 chain (254 aa).

Positions 1–23 (MILNKALMLGALALTTVMSPCGG) are cleaved as a signal peptide. The segment at 24–119 (EDIVADHVAS…EVPEVTVFSK (96 aa)) is alpha-1. The Extracellular segment spans residues 24 to 216 (EDIVADHVAS…IPAPMSELTE (193 aa)). Asparagine 103 and asparagine 143 each carry an N-linked (GlcNAc...) asparagine glycan. Positions 112-204 (PEVTVFSKSP…LDKPLLKHWE (93 aa)) constitute an Ig-like C1-type domain. An alpha-2 region spans residues 120–203 (SPVTLGQPNI…GLDKPLLKHW (84 aa)). A disulfide bridge links cysteine 132 with cysteine 188. Residues 204 to 216 (EPEIPAPMSELTE) form a connecting peptide region. Residues 217–239 (TVVCALGLSVGLVGIVVGTVFII) traverse the membrane as a helical segment. Residues 240-254 (RGLRSVGASRHQGPL) lie on the Cytoplasmic side of the membrane.

This sequence belongs to the MHC class II family. Heterodimer of an alpha and a beta subunit; also referred as MHC class II molecule. In the endoplasmic reticulum (ER) it forms a heterononamer; 3 MHC class II molecules bind to a CD74 homotrimer (also known as invariant chain or HLA class II histocompatibility antigen gamma chain). In the endosomal/lysosomal system; CD74 undergoes sequential degradation by various proteases; leaving a small fragment termed CLIP on each MHC class II molecule. MHC class II molecule interacts with HLA_DM, and HLA_DO in B-cells, in order to release CLIP and facilitate the binding of antigenic peptides.

It is found in the cell membrane. The protein localises to the endoplasmic reticulum membrane. The protein resides in the golgi apparatus. Its subcellular location is the trans-Golgi network membrane. It localises to the endosome membrane. It is found in the lysosome membrane. Functionally, binds peptides derived from antigens that access the endocytic route of antigen presenting cells (APC) and presents them on the cell surface for recognition by the CD4 T-cells. The peptide binding cleft accommodates peptides of 10-30 residues. The peptides presented by MHC class II molecules are generated mostly by degradation of proteins that access the endocytic route, where they are processed by lysosomal proteases and other hydrolases. Exogenous antigens that have been endocytosed by the APC are thus readily available for presentation via MHC II molecules, and for this reason this antigen presentation pathway is usually referred to as exogenous. As membrane proteins on their way to degradation in lysosomes as part of their normal turn-over are also contained in the endosomal/lysosomal compartments, exogenous antigens must compete with those derived from endogenous components. Autophagy is also a source of endogenous peptides, autophagosomes constitutively fuse with MHC class II loading compartments. In addition to APCs, other cells of the gastrointestinal tract, such as epithelial cells, express MHC class II molecules and CD74 and act as APCs, which is an unusual trait of the GI tract. To produce a MHC class II molecule that presents an antigen, three MHC class II molecules (heterodimers of an alpha and a beta chain) associate with a CD74 trimer in the ER to form a heterononamer. Soon after the entry of this complex into the endosomal/lysosomal system where antigen processing occurs, CD74 undergoes a sequential degradation by various proteases, including CTSS and CTSL, leaving a small fragment termed CLIP (class-II-associated invariant chain peptide). The removal of CLIP is facilitated by HLA-DM via direct binding to the alpha-beta-CLIP complex so that CLIP is released. HLA-DM stabilizes MHC class II molecules until primary high affinity antigenic peptides are bound. The MHC II molecule bound to a peptide is then transported to the cell membrane surface. In B-cells, the interaction between HLA-DM and MHC class II molecules is regulated by HLA-DO. Primary dendritic cells (DCs) also to express HLA-DO. Lysosomal microenvironment has been implicated in the regulation of antigen loading into MHC II molecules, increased acidification produces increased proteolysis and efficient peptide loading. The polypeptide is HLA class II histocompatibility antigen, DQ alpha 1 chain (HLA-DQA1) (Homo sapiens (Human)).